Here is a 443-residue protein sequence, read N- to C-terminus: tRNA(Ile2) 2-agmatinylcytidine synthetase TiaS (443 aa).

Belongs to the TiaS family.

It is found in the cytoplasm. It catalyses the reaction cytidine(34) in tRNA(Ile2) + agmatine + ATP + H2O = 2-agmatinylcytidine(34) in tRNA(Ile2) + AMP + 2 phosphate + 2 H(+). Its function is as follows. ATP-dependent agmatine transferase that catalyzes the formation of 2-agmatinylcytidine (agm2C) at the wobble position (C34) of tRNA(Ile2), converting the codon specificity from AUG to AUA. The chain is tRNA(Ile2) 2-agmatinylcytidine synthetase TiaS from Saccharolobus islandicus (strain L.S.2.15 / Lassen #1) (Sulfolobus islandicus).